Consider the following 79-residue polypeptide: Acyl carrier protein (79 aa).

The region spanning 2–77 (SDIEQRVKKI…QAIDYAKAHV (76 aa)) is the Carrier domain. Ser37 carries the post-translational modification O-(pantetheine 4'-phosphoryl)serine.

This sequence belongs to the acyl carrier protein (ACP) family. 4'-phosphopantetheine is transferred from CoA to a specific serine of apo-ACP by AcpS. This modification is essential for activity because fatty acids are bound in thioester linkage to the sulfhydryl of the prosthetic group.

It localises to the cytoplasm. It participates in lipid metabolism; fatty acid biosynthesis. Functionally, carrier of the growing fatty acid chain in fatty acid biosynthesis. The chain is Acyl carrier protein from Janthinobacterium sp. (strain Marseille) (Minibacterium massiliensis).